The following is a 127-amino-acid chain: Aspartate 1-decarboxylase (127 aa).

The active-site Schiff-base intermediate with substrate; via pyruvic acid is the Ser25. Ser25 carries the pyruvic acid (Ser) modification. Residue Thr57 coordinates substrate. Tyr58 (proton donor) is an active-site residue. 73–75 provides a ligand contact to substrate; sequence GAA.

The protein belongs to the PanD family. In terms of assembly, heterooctamer of four alpha and four beta subunits. Requires pyruvate as cofactor. In terms of processing, is synthesized initially as an inactive proenzyme, which is activated by self-cleavage at a specific serine bond to produce a beta-subunit with a hydroxyl group at its C-terminus and an alpha-subunit with a pyruvoyl group at its N-terminus.

The protein localises to the cytoplasm. The enzyme catalyses L-aspartate + H(+) = beta-alanine + CO2. The protein operates within cofactor biosynthesis; (R)-pantothenate biosynthesis; beta-alanine from L-aspartate: step 1/1. Functionally, catalyzes the pyruvoyl-dependent decarboxylation of aspartate to produce beta-alanine. This Halalkalibacterium halodurans (strain ATCC BAA-125 / DSM 18197 / FERM 7344 / JCM 9153 / C-125) (Bacillus halodurans) protein is Aspartate 1-decarboxylase.